The sequence spans 324 residues: Probable UDP-sugar transporter protein SLC35A4 (324 aa).

The Cytoplasmic portion of the chain corresponds to 1-18 (MSVEDGGMPGLARPKQAR). Residues 19 to 39 (WTLMLFLSTAMYGAHAPFLAL) traverse the membrane as a helical segment. Over 40-52 (CHVDGRVPFRPSS) the chain is Lumenal. Residues 53–73 (AVLLTELTKLLLCAFSLLVGW) traverse the membrane as a helical segment. Residues 74 to 85 (QTWPQGTPPWRQ) are Cytoplasmic-facing. Residues 86–106 (AAPFALSALLYGANNNLVIYL) traverse the membrane as a helical segment. Residues 107-142 (QRYMDPSTYQVLSNLKIGSTALLYCLCLGHRLSARQ) lie on the Lumenal side of the membrane. Residues 143–163 (GLALLLLMAAGACYASGGFQE) traverse the membrane as a helical segment. Residues 164–180 (PGNTLPGPRSAAGARPM) lie on the Cytoplasmic side of the membrane. The helical transmembrane segment at 181–201 (PLHITPLGLLLLILYCLISGL) threads the bilayer. The Lumenal portion of the chain corresponds to 202 to 214 (SSVYTELIMKRQR). A helical transmembrane segment spans residues 215–235 (LPLALQNLFLYTFGVILNLGL). The Cytoplasmic segment spans residues 236–248 (YAGSGPGPGFLEG). Residues 249-271 (FSGWAVLVVLNQAVNGLLMSAVM) form a helical membrane-spanning segment. Residues 272 to 279 (KHGSSITR) are Lumenal-facing. A helical membrane pass occupies residues 280–300 (LFIVSCSLVVNAVLSAVLLQL). Topologically, residues 301-324 (QLTATFFLAALLIGLAVCLYYGSP) are cytoplasmic.

The protein belongs to the nucleotide-sugar transporter family. SLC35A subfamily. As to quaternary structure, found in a complex with SLC35A2 and SLC35A3. In terms of tissue distribution, expressed in the kidney, lung, testis, and prostate. Expressed in the brain by sets of neurons, such as the pyramidal cells of the cortex, the Purkinje cells of the cerebellum, and the motoneurons of the brainstem.

Its subcellular location is the golgi apparatus membrane. It carries out the reaction CDP-L-ribitol(in) + CDP(out) = CDP-L-ribitol(out) + CDP(in). In terms of biological role, mediates the transport of CDP-ribitol. Does not exhibit CMP-sialic acid, UDP-galactose and UDP-N-acetylglucosamine transport activity. In Rattus norvegicus (Rat), this protein is Probable UDP-sugar transporter protein SLC35A4.